Consider the following 222-residue polypeptide: Uridine diphosphate glucose pyrophosphatase NUDT14 (222 aa).

Residues 38–206 (KTHDSVTVLL…DIPKTLGVIF (169 aa)) enclose the Nudix hydrolase domain. The Nudix box motif lies at 111-129 (PGLSLEEVACKEAWEECGY).

The protein belongs to the Nudix hydrolase family. As to quaternary structure, homodimer. Mg(2+) is required as a cofactor.

Its subcellular location is the cytoplasm. It catalyses the reaction UDP-sugar + H2O = UMP + alpha-D-aldose 1-phosphate.. Hydrolyzes UDP-glucose to glucose 1-phosphate and UMP and ADP-ribose to ribose 5-phosphate and AMP. The physiological substrate is probably UDP-glucose. Poor activity on other substrates such as ADP-glucose, CDP-glucose, GDP-glucose and GDP-mannose. In Homo sapiens (Human), this protein is Uridine diphosphate glucose pyrophosphatase NUDT14 (NUDT14).